Reading from the N-terminus, the 247-residue chain is DNA polymerase epsilon subunit D (247 aa).

A disordered region spans residues 128 to 247 (KKHKADKKVP…EGQNSSDDDS (120 aa)). Over residues 150–159 (RLKDNDEQII) the composition is skewed to basic and acidic residues. 3 stretches are compositionally biased toward acidic residues: residues 165–188 (ADME…NDED), 196–215 (EEEE…EVEE), and 224–247 (EEDE…DDDS).

Heterotetramer. Consists of four subunits: POL2, DPB2, DPB3 and DPB4.

It localises to the nucleus. As accessory component of the DNA polymerase epsilon (DNA polymerase II) participates in chromosomal DNA replication. The protein is DNA polymerase epsilon subunit D (DPB4) of Debaryomyces hansenii (strain ATCC 36239 / CBS 767 / BCRC 21394 / JCM 1990 / NBRC 0083 / IGC 2968) (Yeast).